The primary structure comprises 964 residues: Integrator complex subunit 4 (964 aa).

Position 27 is an N6-acetyllysine (lysine 27). 8 HEAT repeats span residues 67–106 (AESV…TAGF), 146–184 (QATQ…LEKS), 191–229 (GSAA…RGLK), 230–264 (LHQT…SQLY), 278–314 (IRLV…EQVS), 370–406 (NLIE…AQSS), 407–445 (PSFA…NITL), and 447–485 (EDQL…GIHL). Residue lysine 792 forms a Glycyl lysine isopeptide (Lys-Gly) (interchain with G-Cter in SUMO1); alternate linkage. A Glycyl lysine isopeptide (Lys-Gly) (interchain with G-Cter in SUMO2); alternate cross-link involves residue lysine 792.

Belongs to the Integrator subunit 4 family. In terms of assembly, component of the Integrator complex, composed of core subunits INTS1, INTS2, INTS3, INTS4, INTS5, INTS6, INTS7, INTS8, INTS9/RC74, INTS10, INTS11/CPSF3L, INTS12, INTS13, INTS14 and INTS15. The core complex associates with protein phosphatase 2A subunits PPP2CA and PPP2R1A, to form the Integrator-PP2A (INTAC) complex. INTS4 is part of the RNA endonuclease subcomplex, composed of INTS4, INTS9, INTS11 and inositol hexakisphosphate (InsP6). Interacts with BRAT1; interaction is required for the assembly of the RNA endonuclease subcomplex.

It is found in the nucleus. It localises to the cytoplasm. Functionally, component of the integrator complex, a multiprotein complex that terminates RNA polymerase II (Pol II) transcription in the promoter-proximal region of genes. The integrator complex provides a quality checkpoint during transcription elongation by driving premature transcription termination of transcripts that are unfavorably configured for transcriptional elongation: the complex terminates transcription by (1) catalyzing dephosphorylation of the C-terminal domain (CTD) of Pol II subunit POLR2A/RPB1 and SUPT5H/SPT5, (2) degrading the exiting nascent RNA transcript via endonuclease activity and (3) promoting the release of Pol II from bound DNA. The integrator complex is also involved in terminating the synthesis of non-coding Pol II transcripts, such as enhancer RNAs (eRNAs), small nuclear RNAs (snRNAs), telomerase RNAs and long non-coding RNAs (lncRNAs). Within the integrator complex, INTS4 acts as an scaffold that links INTS9 and INTS11. Mediates recruitment of cytoplasmic dynein to the nuclear envelope, probably as component of the integrator complex. The polypeptide is Integrator complex subunit 4 (Ints4) (Mus musculus (Mouse)).